The following is a 263-amino-acid chain: 4-hydroxy-2-oxo-heptane-1,7-dioate aldolase (263 aa).

The Proton acceptor role is filled by His-45. Residue Gln-147 participates in substrate binding. Residue Glu-149 participates in a divalent metal cation binding. Residues Ala-174 and Asp-175 each contribute to the substrate site. A divalent metal cation is bound at residue Asp-175.

The protein belongs to the HpcH/HpaI aldolase family. As to quaternary structure, homohexamer; trimer of dimers. A divalent metal cation is required as a cofactor.

It carries out the reaction 4-hydroxy-2-oxoheptanedioate = succinate semialdehyde + pyruvate. It functions in the pathway aromatic compound metabolism; 4-hydroxyphenylacetate degradation; pyruvate and succinate semialdehyde from 4-hydroxyphenylacetate: step 7/7. Functionally, catalyzes the reversible retro-aldol cleavage of 4-hydroxy-2-ketoheptane-1,7-dioate (HKHD) to pyruvate and succinic semialdehyde. This is 4-hydroxy-2-oxo-heptane-1,7-dioate aldolase from Salmonella typhimurium (strain LT2 / SGSC1412 / ATCC 700720).